The following is a 684-amino-acid chain: Phenoloxidase 1 (684 aa).

Positions 1 to 50 (MSDKNKLLLLFDRPLETVIVPRGPDQEAFDVPVDLLSDRYKAIGVQVSNR) are cleaved as a propeptide — removed by PPAF1. A glycan (N-linked (GlcNAc...) asparagine) is linked at asparagine 80. Positions 208, 212, and 237 each coordinate Cu cation. Catalysis depends on glutamate 349, which acts as the Proton acceptor. Residues asparagine 352 and asparagine 356 are each glycosylated (N-linked (GlcNAc...) asparagine). Cu cation-binding residues include histidine 364, histidine 368, and histidine 404. Asparagine 486, asparagine 491, and asparagine 545 each carry an N-linked (GlcNAc...) asparagine glycan. 2 disulfide bridges follow: cysteine 579–cysteine 621 and cysteine 581–cysteine 628.

It belongs to the tyrosinase family. In terms of assembly, dimer. Might form a homodimer or a heterodimer with PPO1. Might interact with PPAF2 (via CLIP domain); the interaction might be required for PPO1 activity. Requires Cu(2+) as cofactor. Propeptide cleaved by PPAF1. In terms of tissue distribution, hemocytes.

The protein localises to the secreted. Functionally, this is a copper-containing oxidase that functions in the formation of pigments such as melanins and other polyphenolic compounds. Catalyzes the oxidation of o-diphenols (N-acetyldopamine, 4-methylcatechol and dopamine). Cannot oxidize monophenols and p-phenols (L-tyrosine, tyramine, gentisic acid and hydroquinone). Binds to the surface of hemocytes and is involved in hemocyte melanization. Activation of the enzyme in response to bacterial lipopolysaccharides (LPS) suggests it may play a role in innate immunity. The chain is Phenoloxidase 1 from Holotrichia diomphalia (Korean black chafer).